Reading from the N-terminus, the 84-residue chain is Large ribosomal subunit protein bL27 (84 aa).

The segment at 1–25 (MAHKKGQGSTQNNRDSAGRRLGVKK) is disordered.

This sequence belongs to the bacterial ribosomal protein bL27 family.

The sequence is that of Large ribosomal subunit protein bL27 from Sulfurovum sp. (strain NBC37-1).